The following is a 383-amino-acid chain: Proton extrusion protein PxcA (383 aa).

A run of 4 helical transmembrane segments spans residues 163–183 (ILLLLILVPLLIQQVAGAYII), 258–278 (AVKNVFSDLSALIAFTVVCFA), 306–326 (IILFTDIFVGFHSPEGWTVLL), and 341–361 (FVMLFIATFPVILATIFKYWI).

Belongs to the CemA family.

The protein resides in the cell inner membrane. Its function is as follows. Required for H(+) efflux immediately after light irradiation to form a rapid H(+) concentration gradient across the thylakoid membranes. Together with PxcL, contributes to transient H(+) uptake following dark to light transition. The sequence is that of Proton extrusion protein PxcA from Synechococcus sp. (strain CC9902).